The chain runs to 179 residues: Protein HEADING DATE 3A (179 aa).

It belongs to the phosphatidylethanolamine-binding protein family. As to expression, expressed in the inner region of the SAM, stem and leaf blade vascular tissues (at protein level).

The protein resides in the cytoplasm. It localises to the nucleus. Functionally, probable mobile flower-promoting signal (florigen) that moves from the leaf to the shoot apical meristem (SAM) and induces flowering. Promotes the transition from vegetative growth to flowering downstream of HD1 and EHD1 under short day (SD) conditions. Acts upstream of MADS14 and MADS15. This chain is Protein HEADING DATE 3A (HD3A), found in Oryza sativa subsp. japonica (Rice).